We begin with the raw amino-acid sequence, 734 residues long: MALRFPRFSQGLAQDPTTRRIWFGIATAHDFESHDDITEERLYQNIFASHFGQLAIIFLWTSGNLFHVAWQGNFESWVQDPLHVRPIAHAIWDPHFGQPAVEAFTRGGSLGPVNIAYSGVYQWWYTIGLRTNEDLYTGALFLLFLSAISLLAGWFHLQPKWKPSVSWFKNAESRLNHHLSGLFGVSSLAWTGHLVHVAIPGSRGEYVRWNNFLEVLPHPQGLGPLFTGQWNLYAQNPDSSSHLFGTSQGAGTAVLTLLGGFHPQTQSLWLTDIAHHHLAIAFIFLVAGHMYRTNFGIGHSIKDLLDAHIPPGGRLGRGHKGLYDTINNSLHFQLGLALASLGVITSLVAQHMYSLPAYAFIAQDFTTQAALYTHHQYIAGFIMTGAFAHGAIFFIRDYNPEQNEDNVLARMLDHKEAIISHLSWASLFLGFHTLGLYVHNDVMLAFGTPEKQILIEPIFAQWIQSAHGKTSYGFDVLLSSTSGPAFNAGRNIWLPGWLNAINENSNSLFLTIGPGDFLVHHAIALGLHTTTLILVKGALDARGSKLMPDKKDFGYSFPCDGPGRGGTCDISAWDAFYLAVFWMLNTIGWVTFYWHWKHITLWQGNVSQFNESSTYLMGWLRDYLWLNSSQLINGYNPFGMNSLSVWAWMFLFGHLVWATGFMFLIFWRGYWQELIETLAWAHERTPLANLIRWRDKPVALSIVQARLVGLAHFSVGYIFTYAAFLIASTSGKFG.

A run of 8 helical transmembrane segments spans residues Ile46–Ala69, Leu135–Gln158, Leu175–Ile199, Ile273–Tyr291, Leu330–Tyr353, Ala369–Ile395, Ala417–His439, and Phe517–Val535. [4Fe-4S] cluster is bound by residues Cys559 and Cys568. A run of 2 helical transmembrane segments spans residues Ala575 to Trp596 and Leu643 to Ile665. Chlorophyll a is bound by residues His654, Met662, and Tyr670. Position 671 (Trp671) interacts with phylloquinone. A helical transmembrane segment spans residues Leu707–Ala727.

This sequence belongs to the PsaA/PsaB family. The PsaA/B heterodimer binds the P700 chlorophyll special pair and subsequent electron acceptors. PSI consists of a core antenna complex that captures photons, and an electron transfer chain that converts photonic excitation into a charge separation. The eukaryotic PSI reaction center is composed of at least 11 subunits. It depends on P700 is a chlorophyll a/chlorophyll a' dimer, A0 is one or more chlorophyll a, A1 is one or both phylloquinones and FX is a shared 4Fe-4S iron-sulfur center. as a cofactor.

The protein localises to the plastid. The protein resides in the chloroplast thylakoid membrane. It catalyses the reaction reduced [plastocyanin] + hnu + oxidized [2Fe-2S]-[ferredoxin] = oxidized [plastocyanin] + reduced [2Fe-2S]-[ferredoxin]. Functionally, psaA and PsaB bind P700, the primary electron donor of photosystem I (PSI), as well as the electron acceptors A0, A1 and FX. PSI is a plastocyanin-ferredoxin oxidoreductase, converting photonic excitation into a charge separation, which transfers an electron from the donor P700 chlorophyll pair to the spectroscopically characterized acceptors A0, A1, FX, FA and FB in turn. Oxidized P700 is reduced on the lumenal side of the thylakoid membrane by plastocyanin. The sequence is that of Photosystem I P700 chlorophyll a apoprotein A2 from Jasminum nudiflorum (Winter jasmine).